The primary structure comprises 573 residues: Arylsulfatase I (573 aa).

Residues 1–23 (MHALTGLSLVSLLSFGYLSWDWA) form the signal peptide. Residues D56, D57, and C94 each contribute to the Ca(2+) site. C94 (nucleophile) is an active-site residue. 3-oxoalanine (Cys) is present on C94. A substrate-binding site is contributed by K148. The active site involves H150. A substrate-binding site is contributed by H240. N-linked (GlcNAc...) asparagine glycosylation is found at N277 and N289. Ca(2+) is bound by residues D298 and N299. Residue K316 participates in substrate binding. Residues N467 and N497 are each glycosylated (N-linked (GlcNAc...) asparagine). The disordered stretch occupies residues 516 to 550 (FNGGAWGPWASDEEEEEEEEEAGRARSFSRGRRKK). Acidic residues predominate over residues 526–536 (SDEEEEEEEEE).

It belongs to the sulfatase family. It depends on Ca(2+) as a cofactor. In terms of processing, the oxidation of Cys-94 residue to 3-oxoalanine (also known as C(alpha)-formylglycine) by SUMF1/Sulfatase-modifying factor 1, seems critical for catalytic activity.

Its subcellular location is the secreted. The protein resides in the endoplasmic reticulum. Its function is as follows. Displays arylsulfatase activity at neutral pH, when co-expressed with SUMF1; arylsulfatase activity is measured in the secretion medium of retinal cell line, but no activity is recorded when measured in cell extracts. In Canis lupus familiaris (Dog), this protein is Arylsulfatase I (ARSI).